A 140-amino-acid polypeptide reads, in one-letter code: Nucleoside diphosphate kinase (140 aa).

Positions 11, 59, 87, 93, 104, and 114 each coordinate ATP. Histidine 117 (pros-phosphohistidine intermediate) is an active-site residue.

Belongs to the NDK family. Homotetramer. Requires Mg(2+) as cofactor.

Its subcellular location is the cytoplasm. The enzyme catalyses a 2'-deoxyribonucleoside 5'-diphosphate + ATP = a 2'-deoxyribonucleoside 5'-triphosphate + ADP. The catalysed reaction is a ribonucleoside 5'-diphosphate + ATP = a ribonucleoside 5'-triphosphate + ADP. Its function is as follows. Major role in the synthesis of nucleoside triphosphates other than ATP. The ATP gamma phosphate is transferred to the NDP beta phosphate via a ping-pong mechanism, using a phosphorylated active-site intermediate. The chain is Nucleoside diphosphate kinase from Methylorubrum extorquens (strain CM4 / NCIMB 13688) (Methylobacterium extorquens).